A 306-amino-acid polypeptide reads, in one-letter code: tRNA pseudouridine synthase B (306 aa).

Aspartate 43 functions as the Nucleophile in the catalytic mechanism.

Belongs to the pseudouridine synthase TruB family. Type 1 subfamily.

The catalysed reaction is uridine(55) in tRNA = pseudouridine(55) in tRNA. Responsible for synthesis of pseudouridine from uracil-55 in the psi GC loop of transfer RNAs. The protein is tRNA pseudouridine synthase B of Heliobacterium modesticaldum (strain ATCC 51547 / Ice1).